A 209-amino-acid chain; its full sequence is Ribosomal RNA large subunit methyltransferase E (209 aa).

Residues G63, W65, D83, D99, and D124 each coordinate S-adenosyl-L-methionine. The Proton acceptor role is filled by K164.

The protein belongs to the class I-like SAM-binding methyltransferase superfamily. RNA methyltransferase RlmE family.

It is found in the cytoplasm. It catalyses the reaction uridine(2552) in 23S rRNA + S-adenosyl-L-methionine = 2'-O-methyluridine(2552) in 23S rRNA + S-adenosyl-L-homocysteine + H(+). Its function is as follows. Specifically methylates the uridine in position 2552 of 23S rRNA at the 2'-O position of the ribose in the fully assembled 50S ribosomal subunit. The protein is Ribosomal RNA large subunit methyltransferase E of Alkalilimnicola ehrlichii (strain ATCC BAA-1101 / DSM 17681 / MLHE-1).